The chain runs to 198 residues: ATP-dependent Clp protease proteolytic subunit (198 aa).

The Nucleophile role is filled by serine 98. Residue histidine 123 is part of the active site.

Belongs to the peptidase S14 family. As to quaternary structure, fourteen ClpP subunits assemble into 2 heptameric rings which stack back to back to give a disk-like structure with a central cavity, resembling the structure of eukaryotic proteasomes.

It localises to the cytoplasm. The catalysed reaction is Hydrolysis of proteins to small peptides in the presence of ATP and magnesium. alpha-casein is the usual test substrate. In the absence of ATP, only oligopeptides shorter than five residues are hydrolyzed (such as succinyl-Leu-Tyr-|-NHMec, and Leu-Tyr-Leu-|-Tyr-Trp, in which cleavage of the -Tyr-|-Leu- and -Tyr-|-Trp bonds also occurs).. Functionally, cleaves peptides in various proteins in a process that requires ATP hydrolysis. Has a chymotrypsin-like activity. Plays a major role in the degradation of misfolded proteins. The chain is ATP-dependent Clp protease proteolytic subunit from Bacillus velezensis (strain DSM 23117 / BGSC 10A6 / LMG 26770 / FZB42) (Bacillus amyloliquefaciens subsp. plantarum).